Here is a 171-residue protein sequence, read N- to C-terminus: MFLVKMVLGFLILLSPLCATGLDVSQTDIIERSLNFLLFAGILWYFLAKKLRSFLRSKSLEISKRLEEIQAQLKVSKENKKKLLKELEQAKEKAELIISDANKEAYTITQKYELQTKMDVENLIKNSKALMDLEVKKIKRELVESVFKDLRESKKVSFNVQDCVNILKQRL.

A helical transmembrane segment spans residues phenylalanine 2 to leucine 22.

The protein belongs to the ATPase B chain family. In terms of assembly, F-type ATPases have 2 components, F(1) - the catalytic core - and F(0) - the membrane proton channel. F(1) has five subunits: alpha(3), beta(3), gamma(1), delta(1), epsilon(1). F(0) has three main subunits: a(1), b(2) and c(10-14). The alpha and beta chains form an alternating ring which encloses part of the gamma chain. F(1) is attached to F(0) by a central stalk formed by the gamma and epsilon chains, while a peripheral stalk is formed by the delta and b chains.

Its subcellular location is the cell inner membrane. Its function is as follows. F(1)F(0) ATP synthase produces ATP from ADP in the presence of a proton or sodium gradient. F-type ATPases consist of two structural domains, F(1) containing the extramembraneous catalytic core and F(0) containing the membrane proton channel, linked together by a central stalk and a peripheral stalk. During catalysis, ATP synthesis in the catalytic domain of F(1) is coupled via a rotary mechanism of the central stalk subunits to proton translocation. Functionally, component of the F(0) channel, it forms part of the peripheral stalk, linking F(1) to F(0). The polypeptide is ATP synthase subunit b (Helicobacter pylori (strain HPAG1)).